Reading from the N-terminus, the 532-residue chain is Light-independent protochlorophyllide reductase subunit B (532 aa).

Asp-36 serves as a coordination point for [4Fe-4S] cluster. The Proton donor role is filled by Asp-292. Gly-428 to Leu-429 contributes to the substrate binding site. The segment at Glu-445 to Asp-486 is disordered.

It belongs to the ChlB/BchB/BchZ family. As to quaternary structure, protochlorophyllide reductase is composed of three subunits; BchL, BchN and BchB. Forms a heterotetramer of two BchB and two BchN subunits. [4Fe-4S] cluster is required as a cofactor.

It catalyses the reaction chlorophyllide a + oxidized 2[4Fe-4S]-[ferredoxin] + 2 ADP + 2 phosphate = protochlorophyllide a + reduced 2[4Fe-4S]-[ferredoxin] + 2 ATP + 2 H2O. It functions in the pathway porphyrin-containing compound metabolism; bacteriochlorophyll biosynthesis (light-independent). Its function is as follows. Component of the dark-operative protochlorophyllide reductase (DPOR) that uses Mg-ATP and reduced ferredoxin to reduce ring D of protochlorophyllide (Pchlide) to form chlorophyllide a (Chlide). This reaction is light-independent. The NB-protein (BchN-BchB) is the catalytic component of the complex. The chain is Light-independent protochlorophyllide reductase subunit B from Chlorobium phaeobacteroides (strain BS1).